The chain runs to 1128 residues: Nck-associated protein 1 (1128 aa).

Residues 640 to 665 (AVNKKSKKQTGKKGEPEREKPGVESM) form a disordered region. A compositionally biased stretch (basic and acidic residues) spans 651–665 (KKGEPEREKPGVESM). A helical membrane pass occupies residues 995–1015 (IACLLMVFVAVSMPTLASNVM).

This sequence belongs to the HEM-1/HEM-2 family.

Its subcellular location is the cell membrane. The protein resides in the cell projection. The protein localises to the lamellipodium membrane. Part of the WAVE complex that regulates lamellipodia formation. The WAVE complex regulates actin filament reorganization via its interaction with the Arp2/3 complex. Actin remodeling activity is regulated by RAC1. Plays a role in neural tube closure. The polypeptide is Nck-associated protein 1 (nckap1) (Danio rerio (Zebrafish)).